A 72-amino-acid polypeptide reads, in one-letter code: Translation initiation factor IF-1 2 (72 aa).

The region spanning 1-72 is the S1-like domain; it reads MSKDDVIEVE…TRGRIVYRYK (72 aa).

The protein belongs to the IF-1 family. As to quaternary structure, component of the 30S ribosomal translation pre-initiation complex which assembles on the 30S ribosome in the order IF-2 and IF-3, IF-1 and N-formylmethionyl-tRNA(fMet); mRNA recruitment can occur at any time during PIC assembly.

It is found in the cytoplasm. In terms of biological role, one of the essential components for the initiation of protein synthesis. Stabilizes the binding of IF-2 and IF-3 on the 30S subunit to which N-formylmethionyl-tRNA(fMet) subsequently binds. Helps modulate mRNA selection, yielding the 30S pre-initiation complex (PIC). Upon addition of the 50S ribosomal subunit IF-1, IF-2 and IF-3 are released leaving the mature 70S translation initiation complex. The polypeptide is Translation initiation factor IF-1 2 (Symbiobacterium thermophilum (strain DSM 24528 / JCM 14929 / IAM 14863 / T)).